Consider the following 86-residue polypeptide: Small ribosomal subunit protein uS15 (86 aa).

The segment covering 1 to 10 (MSIDTQSIIE) has biased composition (polar residues). Residues 1–21 (MSIDTQSIIENNKRSAHDTGS) form a disordered region.

This sequence belongs to the universal ribosomal protein uS15 family. Part of the 30S ribosomal subunit. Forms a bridge to the 50S subunit in the 70S ribosome, contacting the 23S rRNA.

One of the primary rRNA binding proteins, it binds directly to 16S rRNA where it helps nucleate assembly of the platform of the 30S subunit by binding and bridging several RNA helices of the 16S rRNA. In terms of biological role, forms an intersubunit bridge (bridge B4) with the 23S rRNA of the 50S subunit in the ribosome. The protein is Small ribosomal subunit protein uS15 of Xylella fastidiosa (strain M23).